Consider the following 288-residue polypeptide: ATP synthase gamma chain (288 aa).

This sequence belongs to the ATPase gamma chain family. As to quaternary structure, F-type ATPases have 2 components, CF(1) - the catalytic core - and CF(0) - the membrane proton channel. CF(1) has five subunits: alpha(3), beta(3), gamma(1), delta(1), epsilon(1). CF(0) has three main subunits: a, b and c.

It localises to the cell membrane. Its function is as follows. Produces ATP from ADP in the presence of a proton gradient across the membrane. The gamma chain is believed to be important in regulating ATPase activity and the flow of protons through the CF(0) complex. The polypeptide is ATP synthase gamma chain (Staphylococcus haemolyticus (strain JCSC1435)).